A 227-amino-acid polypeptide reads, in one-letter code: MSQLFYKGEALLLPQTLHIRHLGQQDYQTVWHAMQAYTDNRGADSQDELWIVEHTPVFTQGQAGKSEHILNPGDIPVIQVDRGGQVTYHGPGQLVAYPLIDIKRAKLGVRQLVNHIEQSIIDMLSPYDIKAYAKTDAPGVYVDERKIASLGLRIRKGCSFHGLALNVDMDLAPFRRINPCGYAGLEMVQSKALNGPQSVVEAGDKLIDTFTKTLGYQEVIHHQGLAE.

In terms of domain architecture, BPL/LPL catalytic spans 43–218 (ADSQDELWIV…TFTKTLGYQE (176 aa)). Substrate-binding positions include 82–89 (RGGQVTYH), 149–151 (SLG), and 162–164 (GLA). Cysteine 180 acts as the Acyl-thioester intermediate in catalysis.

This sequence belongs to the LipB family.

The protein resides in the cytoplasm. It carries out the reaction octanoyl-[ACP] + L-lysyl-[protein] = N(6)-octanoyl-L-lysyl-[protein] + holo-[ACP] + H(+). Its pathway is protein modification; protein lipoylation via endogenous pathway; protein N(6)-(lipoyl)lysine from octanoyl-[acyl-carrier-protein]: step 1/2. Catalyzes the transfer of endogenously produced octanoic acid from octanoyl-acyl-carrier-protein onto the lipoyl domains of lipoate-dependent enzymes. Lipoyl-ACP can also act as a substrate although octanoyl-ACP is likely to be the physiological substrate. This Shewanella denitrificans (strain OS217 / ATCC BAA-1090 / DSM 15013) protein is Octanoyltransferase.